Consider the following 411-residue polypeptide: Multifunctional CCA protein (411 aa).

Gly-8 and Arg-11 together coordinate ATP. CTP is bound by residues Gly-8 and Arg-11. Mg(2+) is bound by residues Asp-21 and Asp-23. ATP-binding residues include Arg-91, Arg-137, and Arg-140. CTP-binding residues include Arg-91, Arg-137, and Arg-140. In terms of domain architecture, HD spans 228–333 (SGVHTLLVIE…LKVFNALDIW (106 aa)).

The protein belongs to the tRNA nucleotidyltransferase/poly(A) polymerase family. Bacterial CCA-adding enzyme type 1 subfamily. Monomer. Can also form homodimers and oligomers. It depends on Mg(2+) as a cofactor. Ni(2+) serves as cofactor.

It carries out the reaction a tRNA precursor + 2 CTP + ATP = a tRNA with a 3' CCA end + 3 diphosphate. The catalysed reaction is a tRNA with a 3' CCA end + 2 CTP + ATP = a tRNA with a 3' CCACCA end + 3 diphosphate. Functionally, catalyzes the addition and repair of the essential 3'-terminal CCA sequence in tRNAs without using a nucleic acid template. Adds these three nucleotides in the order of C, C, and A to the tRNA nucleotide-73, using CTP and ATP as substrates and producing inorganic pyrophosphate. tRNA 3'-terminal CCA addition is required both for tRNA processing and repair. Also involved in tRNA surveillance by mediating tandem CCA addition to generate a CCACCA at the 3' terminus of unstable tRNAs. While stable tRNAs receive only 3'-terminal CCA, unstable tRNAs are marked with CCACCA and rapidly degraded. This is Multifunctional CCA protein from Actinobacillus pleuropneumoniae serotype 5b (strain L20).